Consider the following 162-residue polypeptide: Succinate dehydrogenase assembly factor 2, mitochondrial (162 aa).

The N-terminal 35 residues, methionine 1 to tryptophan 35, are a transit peptide targeting the mitochondrion.

It belongs to the SDHAF2 family. Interacts with SDH1 within the SDH catalytic dimer.

It is found in the mitochondrion matrix. Its function is as follows. Plays an essential role in the assembly of succinate dehydrogenase (SDH), an enzyme complex (also referred to as respiratory complex II) that is a component of both the tricarboxylic acid (TCA) cycle and the mitochondrial electron transport chain, and which couples the oxidation of succinate to fumarate with the reduction of ubiquinone (coenzyme Q) to ubiquinol. Required for flavinylation (covalent attachment of FAD) of the flavoprotein subunit SDH1 of the SDH catalytic dimer. It is unclear whether it participates in the chemistry of FAD attachment (enzymatic function) or acts as a chaperone that maintains SDH1 in a conformation that is susceptible to autocatalytic FAD attachment. Does not bind FAD or FADH(2) in vitro. Involved in sporulation. Required for the full activation of the early meiotic inducer IME1. In Saccharomyces cerevisiae (strain ATCC 204508 / S288c) (Baker's yeast), this protein is Succinate dehydrogenase assembly factor 2, mitochondrial.